The following is an 84-amino-acid chain: MAHKKAGGSTRNGRDSESKRLGVKRFGGESVLAGNIIVRQRGTKFHAGVNVGVGRDHTLFALTDGKVKFEVKGPNNRKFISIEG.

The segment at 1–22 (MAHKKAGGSTRNGRDSESKRLG) is disordered.

The protein belongs to the bacterial ribosomal protein bL27 family.

In Shewanella woodyi (strain ATCC 51908 / MS32), this protein is Large ribosomal subunit protein bL27.